The chain runs to 70 residues: Beta-defensin 107 (70 aa).

Residues 1–26 (MPGAMKIFVFILAALILLAQIFQART) form the signal peptide. 2 cysteine pairs are disulfide-bonded: C41-C55 and C45-C64.

Belongs to the beta-defensin family. Specifically expressed in testis.

The protein localises to the secreted. In terms of biological role, has antibacterial activity. The polypeptide is Beta-defensin 107 (DEFB107A) (Homo sapiens (Human)).